The chain runs to 327 residues: Ferredoxin--NADP reductase (327 aa).

The FAD site is built by Thr-18, Asp-37, Gln-45, Tyr-50, Ala-90, Phe-124, Asp-283, and Ser-324.

The protein belongs to the ferredoxin--NADP reductase type 2 family. In terms of assembly, homodimer. It depends on FAD as a cofactor.

It carries out the reaction 2 reduced [2Fe-2S]-[ferredoxin] + NADP(+) + H(+) = 2 oxidized [2Fe-2S]-[ferredoxin] + NADPH. The sequence is that of Ferredoxin--NADP reductase from Saccharopolyspora erythraea (strain ATCC 11635 / DSM 40517 / JCM 4748 / NBRC 13426 / NCIMB 8594 / NRRL 2338).